Consider the following 168-residue polypeptide: Crossover junction endodeoxyribonuclease RuvC (168 aa).

Catalysis depends on residues aspartate 8, glutamate 68, and aspartate 140. Mg(2+) is bound by residues aspartate 8, glutamate 68, and aspartate 140.

The protein belongs to the RuvC family. Homodimer which binds Holliday junction (HJ) DNA. The HJ becomes 2-fold symmetrical on binding to RuvC with unstacked arms; it has a different conformation from HJ DNA in complex with RuvA. In the full resolvosome a probable DNA-RuvA(4)-RuvB(12)-RuvC(2) complex forms which resolves the HJ. Mg(2+) serves as cofactor.

The protein localises to the cytoplasm. It catalyses the reaction Endonucleolytic cleavage at a junction such as a reciprocal single-stranded crossover between two homologous DNA duplexes (Holliday junction).. Functionally, the RuvA-RuvB-RuvC complex processes Holliday junction (HJ) DNA during genetic recombination and DNA repair. Endonuclease that resolves HJ intermediates. Cleaves cruciform DNA by making single-stranded nicks across the HJ at symmetrical positions within the homologous arms, yielding a 5'-phosphate and a 3'-hydroxyl group; requires a central core of homology in the junction. The consensus cleavage sequence is 5'-(A/T)TT(C/G)-3'. Cleavage occurs on the 3'-side of the TT dinucleotide at the point of strand exchange. HJ branch migration catalyzed by RuvA-RuvB allows RuvC to scan DNA until it finds its consensus sequence, where it cleaves and resolves the cruciform DNA. This Gluconacetobacter diazotrophicus (strain ATCC 49037 / DSM 5601 / CCUG 37298 / CIP 103539 / LMG 7603 / PAl5) protein is Crossover junction endodeoxyribonuclease RuvC.